Reading from the N-terminus, the 84-residue chain is Putative membrane protein insertion efficiency factor (84 aa).

Belongs to the UPF0161 family.

Its subcellular location is the cell inner membrane. In terms of biological role, could be involved in insertion of integral membrane proteins into the membrane. This chain is Putative membrane protein insertion efficiency factor, found in Shewanella sp. (strain ANA-3).